The chain runs to 259 residues: Hydroxyacylglutathione hydrolase (259 aa).

Zn(2+)-binding residues include H56, H58, D60, H61, H112, D133, and H171.

This sequence belongs to the metallo-beta-lactamase superfamily. Glyoxalase II family. In terms of assembly, monomer. Requires Zn(2+) as cofactor.

The enzyme catalyses an S-(2-hydroxyacyl)glutathione + H2O = a 2-hydroxy carboxylate + glutathione + H(+). The protein operates within secondary metabolite metabolism; methylglyoxal degradation; (R)-lactate from methylglyoxal: step 2/2. Functionally, thiolesterase that catalyzes the hydrolysis of S-D-lactoyl-glutathione to form glutathione and D-lactic acid. The chain is Hydroxyacylglutathione hydrolase from Pseudomonas putida (strain ATCC 700007 / DSM 6899 / JCM 31910 / BCRC 17059 / LMG 24140 / F1).